A 309-amino-acid chain; its full sequence is Olfactory receptor 5AK2 (309 aa).

Residues 1–25 (MTLGNSTEVTEFYLLGFGAQHEFWC) are Extracellular-facing. Residue Asn5 is glycosylated (N-linked (GlcNAc...) asparagine). The chain crosses the membrane as a helical span at residues 26–46 (ILFIVFLLIYVTSIMGNSGII). Over 47–54 (LLINTDSR) the chain is Cytoplasmic. The chain crosses the membrane as a helical span at residues 55–75 (FQTLTYFFLQHLAFVDICYTS). At 76–99 (AITPKMLQSFTEEKNLMLFQGCVI) the chain is on the extracellular side. Cys97 and Cys189 are disulfide-bonded. The helical transmembrane segment at 100-120 (QFLVYATFATSDCYLLAMMAV) threads the bilayer. Over 121-133 (DPYVAICKPLHYT) the chain is Cytoplasmic. Residues 134-154 (VIMSRTVCIRLVAGSYIMGSI) form a helical membrane-spanning segment. A glycan (N-linked (GlcNAc...) asparagine) is linked at Asn155. Residues 155 to 196 (NASVQTGFTCSLSFCKSNSINHFFCDVPPILALSCSNVDINI) lie on the Extracellular side of the membrane. A helical transmembrane segment spans residues 197–217 (MLLVVFVGSNLIFTGLVVIFS). Over 218-237 (YIYIMATILKMSSSAGRKKS) the chain is Cytoplasmic. A helical membrane pass occupies residues 238–258 (FSTCASHLTAVTIFYGTLSYM). Residues 259–271 (YLQSHSNNSQENM) lie on the Extracellular side of the membrane. Asn265 is a glycosylation site (N-linked (GlcNAc...) asparagine). A helical transmembrane segment spans residues 272–292 (KVAFIFYGTVIPMLNPLIYSL). Over 293–309 (RNKEVKEALKVIGKKLF) the chain is Cytoplasmic.

This sequence belongs to the G-protein coupled receptor 1 family.

The protein resides in the cell membrane. Odorant receptor. The chain is Olfactory receptor 5AK2 (OR5AK2) from Homo sapiens (Human).